The sequence spans 592 residues: NADH-quinone oxidoreductase subunit C/D (592 aa).

Positions 1-183 are NADH dehydrogenase I subunit C; the sequence is MSAAQSPTAQ…DPYTLTVEGQ (183 aa). Residues 207-592 are NADH dehydrogenase I subunit D; it reads DYMFLNLGPN…IDFVMADVDR (386 aa).

It in the N-terminal section; belongs to the complex I 30 kDa subunit family. The protein in the C-terminal section; belongs to the complex I 49 kDa subunit family. In terms of assembly, NDH-1 is composed of 13 different subunits. Subunits NuoB, CD, E, F, and G constitute the peripheral sector of the complex.

The protein localises to the cell inner membrane. It carries out the reaction a quinone + NADH + 5 H(+)(in) = a quinol + NAD(+) + 4 H(+)(out). In terms of biological role, NDH-1 shuttles electrons from NADH, via FMN and iron-sulfur (Fe-S) centers, to quinones in the respiratory chain. The immediate electron acceptor for the enzyme in this species is believed to be ubiquinone. Couples the redox reaction to proton translocation (for every two electrons transferred, four hydrogen ions are translocated across the cytoplasmic membrane), and thus conserves the redox energy in a proton gradient. This is NADH-quinone oxidoreductase subunit C/D from Chromohalobacter salexigens (strain ATCC BAA-138 / DSM 3043 / CIP 106854 / NCIMB 13768 / 1H11).